A 284-amino-acid polypeptide reads, in one-letter code: Two-pore potassium channel 4 (284 aa).

Residues methionine 1–glutamate 21 form a disordered region. Residues methionine 1–lysine 31 are Cytoplasmic-facing. The helical transmembrane segment at tryptophan 32 to threonine 52 threads the bilayer. An intramembrane region (pore-forming) is located at residues aspartate 70–proline 89. Residues threonine 93 to leucine 113 form a helical membrane-spanning segment. The Cytoplasmic segment spans residues asparagine 114–leucine 156. A helical transmembrane segment spans residues cysteine 157–phenylalanine 177. Residues aspartate 184–phenylalanine 203 constitute an intramembrane region (pore-forming). Residues phenylalanine 211 to alanine 231 traverse the membrane as a helical segment. Residues glutamate 232–serine 284 are Cytoplasmic-facing.

The protein belongs to the two pore domain potassium channel (TC 1.A.1.7) family. As to quaternary structure, homodimer. In terms of tissue distribution, predominantly expressed in pollen.

The protein resides in the cell membrane. In terms of biological role, voltage-independent, instantaneously activating, potassium-selective plasma membrane ion channel. Open rectifier. Regulated by cytoplasmic pH and extra-cellular calcium. Has some permeability for Rb(+) and NH(4)(+), but none for Na(+) or Li(+). This is Two-pore potassium channel 4 (TPK4) from Arabidopsis thaliana (Mouse-ear cress).